A 78-amino-acid chain; its full sequence is U-scoloptoxin(04)-Er1a (78 aa).

The signal sequence occupies residues 1 to 24; sequence MTRHLIFAAVLLVCLFVCWNAIGA. Residues 25–28 constitute a propeptide that is removed on maturation; the sequence is QDAR.

This sequence belongs to the scoloptoxin-04 family. In terms of processing, contains 2 disulfide bonds. In terms of tissue distribution, expressed by the venom gland.

The protein localises to the secreted. The polypeptide is U-scoloptoxin(04)-Er1a (Ethmostigmus rubripes (Giant centipede)).